The chain runs to 26 residues: Protein YsdD (26 aa).

Residues 1 to 26 (MTIDKNWLNRSNKDPGRSLRFTHQPV) form a disordered region.

The chain is Protein YsdD from Escherichia coli (strain K12).